Consider the following 430-residue polypeptide: uncharacterized protein (430 aa).

The protein localises to the cytoplasm. It is found in the nucleus. This is an uncharacterized protein from Schizosaccharomyces pombe (strain 972 / ATCC 24843) (Fission yeast).